Consider the following 89-residue polypeptide: Large ribosomal subunit protein bL27 (89 aa).

The tract at residues 1-22 is disordered; sequence MAHTKKGGSSRNGRDSESKRLG.

This sequence belongs to the bacterial ribosomal protein bL27 family.

The polypeptide is Large ribosomal subunit protein bL27 (Brucella melitensis biotype 1 (strain ATCC 23456 / CCUG 17765 / NCTC 10094 / 16M)).